The following is a 499-amino-acid chain: Endosomal/lysosomal proton channel TMEM175 (499 aa).

Topologically, residues 1-30 (MSRLQTEEQAVDSEGDSSLHRRNEEGTQSS) are cytoplasmic. A disordered region spans residues 1-30 (MSRLQTEEQAVDSEGDSSLHRRNEEGTQSS). The residue at position 6 (threonine 6) is a Phosphothreonine. A helical transmembrane segment spans residues 31–53 (HRMLGFSDALLSIIATVMILPVT). The RxxxFSD motif 1 signature appears at 32-38 (RMLGFSD). The Lumenal segment spans residues 54-74 (HTEISPEQQFDKSIQKLLATR). A short helix H1-1 region spans residues 55–60 (TEISPE). Residues 62-68 (QFDKSIQ) form a short helix H2-1 region. Residues 75–97 (IAVYLMTFLIVTVAWTAHTRLFQ) traverse the membrane as a helical segment. At 98–103 (VVGKID) the chain is on the cytoplasmic side. Residues 104–125 (DTLALLNLACMMTITLLPYTFS) traverse the membrane as a helical segment. At 126–135 (LMVTFPDVPL) the chain is on the lumenal side. Residues 136-157 (GIFLFCVCVIAIGSVQAMIVGY) traverse the membrane as a helical segment. Residues 158-181 (AFHFPHLLNPQIQCSTHRDLSRRH) lie on the Cytoplasmic side of the membrane. The chain crosses the membrane as a helical span at residues 182-202 (ILHLVLRGPALCFVAAVFSLF). Topologically, residues 203-207 (FFPLS) are lumenal. Residues 208 to 227 (YLLMVTVIFLPHISKATTWC) form a helical membrane-spanning segment. The Cytoplasmic segment spans residues 228–254 (KDKLMGQRESPAHDMEPFSIDLHAPLS). The helical transmembrane segment at 255-279 (KERVEAFSDGVYAIVATLLILDICE) threads the bilayer. Positions 257 to 263 (RVEAFSD) match the RxxxFSD motif 2 motif. The Lumenal segment spans residues 280-306 (DNVPDPKDVQEKFSGSLVAALGAYGPQ). Residues 285–293 (PKDVQEKFS) form a short helix H1-2 region. The short helix H2-2 stretch occupies residues 295 to 301 (SLVAALG). Residues 307–329 (FLAYFGSFATVGLLWFAHHSLFL) form a helical membrane-spanning segment. The Cytoplasmic portion of the chain corresponds to 330–335 (HVRKAT). A helical transmembrane segment spans residues 336-357 (QTMGLLNILSLAFVGGLPLAYQ). Residues 358-372 (QTSAFARQPHDELER) are Lumenal-facing. Residues 373-393 (VRVSCAIIFFASIFQFAIWTT) form a helical membrane-spanning segment. The Cytoplasmic portion of the chain corresponds to 394–413 (ALLHQTETLQPAVQFGGQEH). The helical transmembrane segment at 414–437 (AFMFAKLALYPCASLLAFAATCLL) threads the bilayer. The Lumenal segment spans residues 438–439 (SR). The chain crosses the membrane as a helical span at residues 440–466 (FSTAIFHLMQISVPFAFLLLRLLVRLA). Over 467–499 (LAGLQVLRGLWPHHPQQDQSEPEAQSQLLPDPC) the chain is Cytoplasmic.

Belongs to the TMEM175 family. In terms of assembly, homodimer. Interacts with AKT (AKT1, AKT2 or AKT3); leading to formation of the lysoK(GF) complex, which activates the channel. Interacts with LAMP1; inhibiting the proton channel activity of TMEM175. Interacts with LAMP2; inhibiting the proton channel activity of TMEM175.

It localises to the endosome membrane. The protein localises to the lysosome membrane. It catalyses the reaction H(+)(in) = H(+)(out). It carries out the reaction K(+)(in) = K(+)(out). With respect to regulation, active at low pH (under pH 4.6): proton channel activity is activated by luminal side protons. Polyunsaturated fatty acids, such as arachidonic acid, also activate the channel activity. Proton channel activity is directly inhibited by LAMP1 or LAMP2, facilitating lysosomal acidification. Channel activity is activated following interaction with AKT (AKT1, AKT2 or AKT3): interaction promotes activation from closed to an open state. Activation by AKT is independent of AKT serine/threonine-protein kinase activity. In terms of biological role, proton-activated proton channel that catalyzes proton efflux from endosomes and lysosomes to maintain a steady-state pH. Activated at low pH (under pH 4.6) by luminal side protons: selectively mediates lysosomal proton release from lysosomes, eliciting a proton leak that balances V-ATPase activity to maintain pH homeostasis. Regulation of lumenal pH stability is required for autophagosome-lysosome fusion. Also acts as a potassium channel at higher pH, regulating potassium conductance in endosomes and lysosomes. Constitutes the pore-forming subunit of the lysoK(GF) complex, a complex activated by extracellular growth factors. The lysoK(GF) complex is composed of TMEM175 and AKT (AKT1, AKT2 or AKT3), a major target of growth factor receptors: in the complex, TMEM175 channel is opened by conformational changes by AKT, leading to its activation. The lysoK(GF) complex is required to protect neurons against stress-induced damage. The polypeptide is Endosomal/lysosomal proton channel TMEM175 (Mus musculus (Mouse)).